The primary structure comprises 220 residues: Uracil-DNA glycosylase 1 (220 aa).

Asp-65 (proton acceptor) is an active-site residue.

This sequence belongs to the uracil-DNA glycosylase (UDG) superfamily. UNG family.

It is found in the cytoplasm. It catalyses the reaction Hydrolyzes single-stranded DNA or mismatched double-stranded DNA and polynucleotides, releasing free uracil.. Functionally, excises uracil residues from the DNA which can arise as a result of misincorporation of dUMP residues by DNA polymerase or due to deamination of cytosine. The sequence is that of Uracil-DNA glycosylase 1 from Bacteroides fragilis (strain ATCC 25285 / DSM 2151 / CCUG 4856 / JCM 11019 / LMG 10263 / NCTC 9343 / Onslow / VPI 2553 / EN-2).